The primary structure comprises 459 residues: MVEHDSSDESVNRRKYLKALTVGAAAGIAGCTGGGGTETESTESGNGNGSGGSTDDTETSGSSSGESWDSQLEVLHGWAGGDGEAAVTALIEAFEEEHPEMDTNFQAVGASANVNLNATILRRLANNNPMSSFANWPGKNLERYSGALMDLEADVWDAEGFKDTMQSRAVELCKFNDKMPAVPIGSHRMNNLFYNTAVFEEAGIDASSLDSVDALLDALETIDQNTDVTPMAQAMVAPWTNLQLWAQILTSQSGVEAYTNFIEGNPDRAAVVEALEALKTINENYITADASSISFTTAGQKVISGKAATIHQGNWVYGMFRADDSFNYKEQWDWIPFPGTEGIYFYHVDSIVAPSNNPSREETIAWQKFVGSKKAQIAFNNPKGSVPLRTDIDPSELTDFLAMTYEDLTDSEAYPPTIAHGLAVTPKTMGACKTAFGDNFMGPFNVEATADALVAAVSE.

The chain crosses the membrane as a helical span at residues 19-36; it reads ALTVGAAAGIAGCTGGGG. The disordered stretch occupies residues 27–68; sequence GIAGCTGGGGTETESTESGNGNGSGGSTDDTETSGSSSGESW.

The protein belongs to the bacterial solute-binding protein 1 family. In terms of assembly, the complex is composed of two ATP-binding proteins (XacJ and XacK), two transmembrane proteins (XacH and XacI) and a solute-binding protein (XacG).

It localises to the cell membrane. In terms of biological role, part of the ABC transporter complex XacGHIJK involved in the uptake of xylose and arabinose. In Haloferax volcanii (strain ATCC 29605 / DSM 3757 / JCM 8879 / NBRC 14742 / NCIMB 2012 / VKM B-1768 / DS2) (Halobacterium volcanii), this protein is Xylose/arabinose-binding protein XacG.